The following is a 55-amino-acid chain: Large ribosomal subunit protein bL33c (55 aa).

It belongs to the bacterial ribosomal protein bL33 family.

The protein localises to the plastid. It is found in the chloroplast. The chain is Large ribosomal subunit protein bL33c from Emiliania huxleyi (Coccolithophore).